A 320-amino-acid polypeptide reads, in one-letter code: MRSAQVYRWQIPMDAGVVLRDRRLKTRDGLYVCLCDGEREGWGEISPLPGFSQETWEEAQTALLTWVNDWLQGNEGLPEMPSVAFGASCALAELTGVLPEAADYRAAPLCTGDPDDLVLRLADMPGEKIAKVKVGLYEAVRDGMVVNLLLEAIPDLHLRLDANRAWTPLKAQQFAKYVNPDYRARIAFLEEPCKTRDDSRAFARETGIAIAWDESLREADFTFEAEEGVKAVVIKPTLTGSLDKVREQVAAAHALGLTVVISSSIESSLGLTQLARIAAWLTPGTLPGLDTLHLMQAQQVRPWPGSALPCLKRDELERLL.

The Proton donor role is filled by lysine 133. Mg(2+)-binding residues include aspartate 161, glutamate 190, and aspartate 213. Lysine 235 (proton acceptor) is an active-site residue.

The protein belongs to the mandelate racemase/muconate lactonizing enzyme family. MenC type 1 subfamily. A divalent metal cation serves as cofactor.

It catalyses the reaction (1R,6R)-6-hydroxy-2-succinyl-cyclohexa-2,4-diene-1-carboxylate = 2-succinylbenzoate + H2O. It participates in quinol/quinone metabolism; 1,4-dihydroxy-2-naphthoate biosynthesis; 1,4-dihydroxy-2-naphthoate from chorismate: step 4/7. The protein operates within quinol/quinone metabolism; menaquinone biosynthesis. Functionally, converts 2-succinyl-6-hydroxy-2,4-cyclohexadiene-1-carboxylate (SHCHC) to 2-succinylbenzoate (OSB). The polypeptide is o-succinylbenzoate synthase (Salmonella paratyphi B (strain ATCC BAA-1250 / SPB7)).